We begin with the raw amino-acid sequence, 200 residues long: Small ribosomal subunit protein eS1 (200 aa).

The protein belongs to the eukaryotic ribosomal protein eS1 family.

This Thermococcus onnurineus (strain NA1) protein is Small ribosomal subunit protein eS1.